The primary structure comprises 507 residues: ATP synthase subunit alpha, mitochondrial (507 aa).

171-178 provides a ligand contact to ATP; that stretch reads GDRQTGKT.

Belongs to the ATPase alpha/beta chains family. In terms of assembly, F-type ATPases have 2 components, CF(1) - the catalytic core - and CF(0) - the membrane proton channel. CF(1) has five subunits: alpha(3), beta(3), gamma(1), delta(1), epsilon(1). CF(0) has three main subunits: a, b and c.

It is found in the mitochondrion. The protein resides in the mitochondrion inner membrane. Functionally, mitochondrial membrane ATP synthase (F(1)F(0) ATP synthase or Complex V) produces ATP from ADP in the presence of a proton gradient across the membrane which is generated by electron transport complexes of the respiratory chain. F-type ATPases consist of two structural domains, F(1) - containing the extramembraneous catalytic core, and F(0) - containing the membrane proton channel, linked together by a central stalk and a peripheral stalk. During catalysis, ATP synthesis in the catalytic domain of F(1) is coupled via a rotary mechanism of the central stalk subunits to proton translocation. Subunits alpha and beta form the catalytic core in F(1). Rotation of the central stalk against the surrounding alpha(3)beta(3) subunits leads to hydrolysis of ATP in three separate catalytic sites on the beta subunits. Subunit alpha does not bear the catalytic high-affinity ATP-binding sites. The chain is ATP synthase subunit alpha, mitochondrial (ATPA) from Arabidopsis thaliana (Mouse-ear cress).